We begin with the raw amino-acid sequence, 1037 residues long: Outer dynein arm-docking complex subunit 2 (1037 aa).

Basic and acidic residues-rich tracts occupy residues 316 to 334 and 376 to 391; these read EEQQ…EDGH and SSIK…KLEK. 2 disordered regions span residues 316 to 353 and 376 to 439; these read EEQQ…FGKS and SSIK…ANAD. ARM repeat units follow at residues 477 to 516, 518 to 557, 528 to 570, 615 to 654, 656 to 695, 739 to 778, 821 to 860, 864 to 903, 905 to 944, and 946 to 985; these read ETCQ…EISH, PQIR…NVAK, GGLP…QHGG, HSNK…ECAS, ENYR…QCAE, KENV…ECCQ, PESM…PCIE, DAGE…NIAK, QENL…RCCM, and GRNR…QLSE. At Lys-545 the chain carries N6-methyllysine.

In terms of assembly, component of the outer dynein arm-docking complex along with ODAD1, ODAD3, and ODAD4. Interacts with CFAP61. In terms of tissue distribution, highly expressed in testis. In males, also detected at lower levels in lung, brain, liver and muscle. In females, detected in ovary.

It localises to the cytoplasm. Its subcellular location is the cytoskeleton. It is found in the cilium axoneme. The protein resides in the cilium basal body. Functionally, component of the outer dynein arm-docking complex (ODA-DC) that mediates outer dynein arms (ODA) binding onto the doublet microtubule. Involved in mediating assembly of both ODAs and their axonemal docking complex onto ciliary microtubules. The polypeptide is Outer dynein arm-docking complex subunit 2 (Mus musculus (Mouse)).